Consider the following 426-residue polypeptide: 5-methylthioadenosine/S-adenosylhomocysteine deaminase (426 aa).

2 residues coordinate Zn(2+): H60 and H62. Residues E89 and H179 each coordinate substrate. H206 contributes to the Zn(2+) binding site. 2 residues coordinate substrate: E209 and D294. D294 provides a ligand contact to Zn(2+).

It belongs to the metallo-dependent hydrolases superfamily. MTA/SAH deaminase family. It depends on Zn(2+) as a cofactor.

The enzyme catalyses S-adenosyl-L-homocysteine + H2O + H(+) = S-inosyl-L-homocysteine + NH4(+). The catalysed reaction is S-methyl-5'-thioadenosine + H2O + H(+) = S-methyl-5'-thioinosine + NH4(+). Its function is as follows. Catalyzes the deamination of 5-methylthioadenosine and S-adenosyl-L-homocysteine into 5-methylthioinosine and S-inosyl-L-homocysteine, respectively. Is also able to deaminate adenosine. In Dictyoglomus thermophilum (strain ATCC 35947 / DSM 3960 / H-6-12), this protein is 5-methylthioadenosine/S-adenosylhomocysteine deaminase.